A 107-amino-acid polypeptide reads, in one-letter code: Anti-adapter protein IraM (107 aa).

The protein belongs to the IraM/RssC family.

Its subcellular location is the cytoplasm. Functionally, inhibits RpoS proteolysis by regulating RssB activity, thereby increasing the stability of the sigma stress factor RpoS during magnesium starvation. The chain is Anti-adapter protein IraM from Escherichia coli (strain K12 / MC4100 / BW2952).